A 234-amino-acid chain; its full sequence is Golgi SNAP receptor complex member 1 (234 aa).

Topologically, residues 1–212 (MSETWEALRK…MQKIKTKKQK (212 aa)) are cytoplasmic. Residues 54–121 (VTTEIEGLIE…RDNVDQVLQR (68 aa)) are a coiled coil. Residues 213–233 (NTMILAGVISACLIFTIFWII) form a helical; Anchor for type IV membrane protein membrane-spanning segment. A topological domain (vesicular) is located at residue N234.

Belongs to the GOSR1 family. As to quaternary structure, component of several multiprotein Golgi SNARE complexes.

Its subcellular location is the golgi apparatus membrane. Its function is as follows. Involved in transport from the ER to the Golgi apparatus as well as in intra-Golgi transport. It belongs to a super-family of proteins called t-SNAREs or soluble NSF (N-ethylmaleimide-sensitive factor) attachment protein receptor. Cooperates with ykt-6 for proper expression of Golgi-resident proteins. Required along with ykt-6 for normal embryonic development, seam cell division or differentiation, and ray formation. This chain is Golgi SNAP receptor complex member 1, found in Caenorhabditis briggsae.